A 286-amino-acid polypeptide reads, in one-letter code: Translocon-associated protein subunit alpha (286 aa).

The signal sequence occupies residues Met-1–Thr-18. Residues Val-19–Thr-207 are Lumenal-facing. Residues Glu-39–Gly-75 show a composition bias toward acidic residues. The interval Glu-39–Ala-83 is disordered. 2 N-linked (GlcNAc...) asparagine glycosylation sites follow: Asn-136 and Asn-191. Residues Ile-208–Leu-228 traverse the membrane as a helical segment. Residues Leu-229 to Glu-286 are Cytoplasmic-facing. Position 247 is a phosphoserine (Ser-247). A Phosphothreonine modification is found at Thr-260. Positions Leu-261–Glu-286 are disordered. Ser-268 carries the phosphoserine modification. The segment covering Ser-268 to Lys-279 has biased composition (basic residues).

It belongs to the TRAP-alpha family. As to quaternary structure, heterotetramer of TRAP-alpha, TRAP-beta, TRAP-delta and TRAP-gamma. Interacts with palmitoylated calnexin (CALX), the interaction is required for efficient folding of glycosylated proteins.

The protein localises to the endoplasmic reticulum membrane. Its function is as follows. TRAP proteins are part of a complex whose function is to bind calcium to the ER membrane and thereby regulate the retention of ER resident proteins. May be involved in the recycling of the translocation apparatus after completion of the translocation process or may function as a membrane-bound chaperone facilitating folding of translocated proteins. In Homo sapiens (Human), this protein is Translocon-associated protein subunit alpha (SSR1).